The primary structure comprises 77 residues: U3-theraphotoxin-Hhn1k (77 aa).

A signal peptide spans 1-14 (TFAGLVLLFVVCYA). The propeptide occupies 15 to 42 (SESEEKEFPKEMLSSIFAVDNDFKQEER). Intrachain disulfides connect cysteine 44-cysteine 57 and cysteine 56-cysteine 69.

This sequence belongs to the neurotoxin 10 (Hwtx-1) family. 51 (Hntx-8) subfamily. Hntx-8 sub-subfamily. In terms of tissue distribution, expressed by the venom gland.

It localises to the secreted. Ion channel inhibitor. The protein is U3-theraphotoxin-Hhn1k of Cyriopagopus hainanus (Chinese bird spider).